The following is a 252-amino-acid chain: Chitooligosaccharide deacetylase (252 aa).

Residues H61 and H125 each coordinate Mg(2+).

Belongs to the YdjC deacetylase family. ChbG subfamily. Homodimer. It depends on Mg(2+) as a cofactor.

Its subcellular location is the cytoplasm. The enzyme catalyses N,N'-diacetylchitobiose + H2O = N-acetyl-beta-D-glucosaminyl-(1-&gt;4)-D-glucosamine + acetate. The catalysed reaction is diacetylchitobiose-6'-phosphate + H2O = N'-monoacetylchitobiose-6'-phosphate + acetate. It functions in the pathway glycan degradation; chitin degradation. In terms of biological role, involved in the degradation of chitin. ChbG is essential for growth on the acetylated chitooligosaccharides chitobiose and chitotriose but is dispensable for growth on cellobiose and chitosan dimer, the deacetylated form of chitobiose. Deacetylation of chitobiose-6-P and chitotriose-6-P is necessary for both the activation of the chb promoter by the regulatory protein ChbR and the hydrolysis of phosphorylated beta-glucosides by the phospho-beta-glucosidase ChbF. Catalyzes the removal of only one acetyl group from chitobiose-6-P to yield monoacetylchitobiose-6-P, the inducer of ChbR and the substrate of ChbF. The chain is Chitooligosaccharide deacetylase from Klebsiella pneumoniae subsp. pneumoniae (strain ATCC 700721 / MGH 78578).